Reading from the N-terminus, the 156-residue chain is Small ribosomal subunit protein uS7 (156 aa).

It belongs to the universal ribosomal protein uS7 family. As to quaternary structure, part of the 30S ribosomal subunit. Contacts proteins S9 and S11.

Its function is as follows. One of the primary rRNA binding proteins, it binds directly to 16S rRNA where it nucleates assembly of the head domain of the 30S subunit. Is located at the subunit interface close to the decoding center, probably blocks exit of the E-site tRNA. In Lactobacillus johnsonii (strain CNCM I-12250 / La1 / NCC 533), this protein is Small ribosomal subunit protein uS7.